Reading from the N-terminus, the 102-residue chain is NADH-quinone oxidoreductase subunit K (102 aa).

3 consecutive transmembrane segments (helical) span residues 5–25 (LEHY…GIFV), 31–51 (IVIL…MVAF), and 66–86 (FVLT…VVFF).

This sequence belongs to the complex I subunit 4L family. NDH-1 is composed of 14 different subunits. Subunits NuoA, H, J, K, L, M, N constitute the membrane sector of the complex.

The protein localises to the cellular chromatophore membrane. The catalysed reaction is a quinone + NADH + 5 H(+)(in) = a quinol + NAD(+) + 4 H(+)(out). Its function is as follows. NDH-1 shuttles electrons from NADH, via FMN and iron-sulfur (Fe-S) centers, to quinones in the respiratory chain. The immediate electron acceptor for the enzyme in this species is believed to be ubiquinone. Couples the redox reaction to proton translocation (for every two electrons transferred, four hydrogen ions are translocated across the cytoplasmic membrane), and thus conserves the redox energy in a proton gradient. The sequence is that of NADH-quinone oxidoreductase subunit K from Rhodobacter capsulatus (Rhodopseudomonas capsulata).